Consider the following 263-residue polypeptide: Putative alpha/beta hydrolase L404 (263 aa).

A lipid anchor (N-myristoyl glycine; by host) is attached at glycine 2.

The protein belongs to the AB hydrolase superfamily.

This Acanthamoeba polyphaga (Amoeba) protein is Putative alpha/beta hydrolase L404.